A 1138-amino-acid polypeptide reads, in one-letter code: Tyrosine-protein kinase receptor Tie-1 (1138 aa).

Residues 1-21 form the signal peptide; it reads MVWRVPPFLLPILFLASHVGA. The Extracellular portion of the chain corresponds to 22–759; that stretch reads AVDLTLLANL…SRAAEEGLDQ (738 aa). The Ig-like C2-type 1 domain occupies 43 to 105; it reads CVSGEAGAGR…PSDLVGVFSC (63 aa). Asn83 and Asn161 each carry an N-linked (GlcNAc...) asparagine glycan. 3 consecutive EGF-like domains span residues 214-256, 258-303, and 305-345; these read GCGA…TRCE, ACRE…SQCQ, and ACAP…VHCE. Disulfide bonds link Cys228-Cys237, Cys231-Cys244, and Cys246-Cys255. Intrachain disulfides connect Cys315–Cys327, Cys321–Cys333, and Cys335–Cys344. The region spanning 372–426 is the Ig-like C2-type 2 domain; the sequence is CAAAGNPFPVRGSIELRKPDGTVLLSTKAIVEPEKTTAEFEVPRLVLADSGFWEC. Fibronectin type-III domains are found at residues 446-545, 548-642, and 646-739; these read PPVP…CPEP, QPWL…LPPS, and APRH…TLGN. N-linked (GlcNAc...) asparagine glycosylation is found at Asn503, Asn596, and Asn709. A helical transmembrane segment spans residues 760–784; the sequence is QLILAVVGSVSATCLTILAALLTLV. Residues 785–1138 lie on the Cytoplasmic side of the membrane; sequence CIRRSCLHRR…AGIDATAEEA (354 aa). Positions 839-1118 constitute a Protein kinase domain; the sequence is ITFEDLIGEG…RMLEARKAYV (280 aa). ATP is bound by residues 845–853 and Lys870; that span reads IGEGNFGQV. Asp979 (proton acceptor) is an active-site residue. Tyr1007 is modified (phosphotyrosine; by autocatalysis).

It belongs to the protein kinase superfamily. Tyr protein kinase family. Tie subfamily. As to quaternary structure, heterodimer with TEK/TIE2. Interacts with SVEP1 (via C-terminus). Phosphorylated on tyrosine residues in response to ANGPT1, most likely by TEK/TIE2. Specifically expressed in developing vascular endothelial cells.

It is found in the cell membrane. The catalysed reaction is L-tyrosyl-[protein] + ATP = O-phospho-L-tyrosyl-[protein] + ADP + H(+). Its function is as follows. Transmembrane tyrosine-protein kinase that may modulate TEK/TIE2 activity and contribute to the regulation of angiogenesis. The polypeptide is Tyrosine-protein kinase receptor Tie-1 (TIE1) (Homo sapiens (Human)).